Consider the following 98-residue polypeptide: NADH-ubiquinone oxidoreductase chain 4L (98 aa).

3 consecutive transmembrane segments (helical) span residues 1–21 (MTSTFIITITIFYLGLLGILI), 29–49 (ILLCLELLLISLFLSLTVWAI), and 61–81 (LILLTLSACEASAGLSLMVAL).

This sequence belongs to the complex I subunit 4L family.

It is found in the mitochondrion membrane. The enzyme catalyses a ubiquinone + NADH + 5 H(+)(in) = a ubiquinol + NAD(+) + 4 H(+)(out). Core subunit of the mitochondrial membrane respiratory chain NADH dehydrogenase (Complex I) that is believed to belong to the minimal assembly required for catalysis. Complex I functions in the transfer of electrons from NADH to the respiratory chain. The immediate electron acceptor for the enzyme is believed to be ubiquinone. The polypeptide is NADH-ubiquinone oxidoreductase chain 4L (ND4L) (Patiria pectinifera (Starfish)).